A 349-amino-acid polypeptide reads, in one-letter code: N-acetyl-gamma-glutamyl-phosphate reductase (349 aa).

Cysteine 149 is an active-site residue.

This sequence belongs to the NAGSA dehydrogenase family. Type 1 subfamily.

The protein resides in the cytoplasm. It catalyses the reaction N-acetyl-L-glutamate 5-semialdehyde + phosphate + NADP(+) = N-acetyl-L-glutamyl 5-phosphate + NADPH + H(+). It participates in amino-acid biosynthesis; L-arginine biosynthesis; N(2)-acetyl-L-ornithine from L-glutamate: step 3/4. Its function is as follows. Catalyzes the NADPH-dependent reduction of N-acetyl-5-glutamyl phosphate to yield N-acetyl-L-glutamate 5-semialdehyde. In Acinetobacter baumannii (strain ACICU), this protein is N-acetyl-gamma-glutamyl-phosphate reductase.